The sequence spans 261 residues: RING finger and CHY zinc finger domain-containing protein 1 (261 aa).

Residues 13 to 80 (LAQGPRGCEH…AQQTCEDCST (68 aa)) form a CHY-type zinc finger. 24 residues coordinate Zn(2+): Cys-20, His-22, Cys-33, Cys-34, Cys-40, Cys-43, His-44, His-50, Cys-62, Cys-65, Cys-75, Cys-78, Cys-87, Cys-90, His-101, Cys-102, Cys-105, Cys-108, His-118, Cys-119, Cys-122, Cys-125, His-134, and Cys-136. The segment at 82-144 (FGEYYCSICH…KCIENVSRQN (63 aa)) adopts a CTCHY-type zinc-finger fold. An RING-type zinc finger spans residues 145-189 (CPICLEDIHTSRVVAHVLPCGHLLHRTCYEEMLKEGYRCPLCMHS).

As to quaternary structure, monomer and homodimer. Interacts with AR, MDM2, KAT5, PLAG1, PLAGL2, COPE, UBE2D2 and GORAB/NTKLBP1. Post-translationally, subject to ubiquitination and proteasomal degradation. Interaction with PLAGL2 or KAT5 enhances protein stability. Detected in testis, liver, kidney and heart.

The protein resides in the nucleus. Its subcellular location is the nucleus speckle. The protein localises to the cytoplasm. It carries out the reaction S-ubiquitinyl-[E2 ubiquitin-conjugating enzyme]-L-cysteine + [acceptor protein]-L-lysine = [E2 ubiquitin-conjugating enzyme]-L-cysteine + N(6)-ubiquitinyl-[acceptor protein]-L-lysine.. Its pathway is protein modification; protein ubiquitination. Functionally, E3 ubiquitin-protein ligase that mediates ubiquitination of target proteins, including p53/TP53, TP73, HDAC1 and CDKN1B. Mediates ubiquitination and degradation of p53/TP53; preferentially acts on tetrameric p53/TP53. Catalyzes monoubiquitinates the translesion DNA polymerase POLH. Involved in the ribosome-associated quality control (RQC) pathway, which mediates the extraction of incompletely synthesized nascent chains from stalled ribosomes: RCHY1 acts downstream of NEMF and recognizes CAT tails associated with stalled nascent chains, leading to their ubiquitination and degradation. The protein is RING finger and CHY zinc finger domain-containing protein 1 (Rchy1) of Mus musculus (Mouse).